Here is a 313-residue protein sequence, read N- to C-terminus: Methionyl-tRNA formyltransferase (313 aa).

Residue 110–113 (SLLP) coordinates (6S)-5,6,7,8-tetrahydrofolate.

Belongs to the Fmt family.

The catalysed reaction is L-methionyl-tRNA(fMet) + (6R)-10-formyltetrahydrofolate = N-formyl-L-methionyl-tRNA(fMet) + (6S)-5,6,7,8-tetrahydrofolate + H(+). Functionally, attaches a formyl group to the free amino group of methionyl-tRNA(fMet). The formyl group appears to play a dual role in the initiator identity of N-formylmethionyl-tRNA by promoting its recognition by IF2 and preventing the misappropriation of this tRNA by the elongation apparatus. The protein is Methionyl-tRNA formyltransferase of Lysinibacillus sphaericus (strain C3-41).